Here is a 265-residue protein sequence, read N- to C-terminus: Flagellar brake protein YcgR (265 aa).

The PilZ domain maps to 135–252 (QRRESYRLET…DETIQRYIFR (118 aa)).

Belongs to the YcgR family. Monomer. Interacts with the flagellar basal bodies.

The protein resides in the bacterial flagellum basal body. Acts as a flagellar brake, regulating swimming and swarming in a bis-(3'-5') cyclic diguanylic acid (c-di-GMP)-dependent manner. Binds 1 c-di-GMP dimer per subunit. Increasing levels of c-di-GMP lead to decreased motility. This is Flagellar brake protein YcgR from Xanthomonas campestris pv. campestris (strain B100).